The following is a 379-amino-acid chain: Dihydroorotate dehydrogenase (quinone) (379 aa).

FMN-binding positions include 79 to 83 (AGCDK) and A103. K83 lines the substrate pocket. Substrate is bound at residue 128–131 (NRLG). FMN is bound by residues N160 and N193. A substrate-binding site is contributed by N193. S196 serves as the catalytic Nucleophile. N198 is a binding site for substrate. 2 residues coordinate FMN: K231 and T259. 260–261 (NT) is a binding site for substrate. FMN-binding positions include G289, G318, and 339–340 (YT).

Belongs to the dihydroorotate dehydrogenase family. Type 2 subfamily. As to quaternary structure, monomer. It depends on FMN as a cofactor.

The protein resides in the cell membrane. The enzyme catalyses (S)-dihydroorotate + a quinone = orotate + a quinol. Its pathway is pyrimidine metabolism; UMP biosynthesis via de novo pathway; orotate from (S)-dihydroorotate (quinone route): step 1/1. Its function is as follows. Catalyzes the conversion of dihydroorotate to orotate with quinone as electron acceptor. The chain is Dihydroorotate dehydrogenase (quinone) from Crocosphaera subtropica (strain ATCC 51142 / BH68) (Cyanothece sp. (strain ATCC 51142)).